We begin with the raw amino-acid sequence, 1115 residues long: Receptor-type tyrosine-protein phosphatase H (1115 aa).

An N-terminal signal peptide occupies residues 1-27 (MAGAGGGLGVWGNLVLLGLCSWTGARA). Residues 28 to 754 (PAPNPGRNLT…VVCHTESAGV (727 aa)) are Extracellular-facing. Fibronectin type-III domains lie at 32 to 121 (PGRN…APNP), 122 to 209 (VRNL…TAHN), 210 to 299 (PVRN…APNP), 300 to 387 (VRNL…TAPN), 388 to 477 (PVRN…VPNA), 478 to 563 (VTSL…TAAT), 564 to 666 (APNE…TYPD), and 665 to 749 (PDTV…VCHT). 10 N-linked (GlcNAc...) asparagine glycosylation sites follow: Asn35, Asn83, Asn172, Asn256, Asn285, Asn350, Asn434, Asn468, Asn556, and Asn642. A helical membrane pass occupies residues 755-775 (IAGAFVGILLFLILVGLLIFF). The Cytoplasmic segment spans residues 776–1115 (LKRRNKKKQQ…AAIQAHKLEV (340 aa)). The Tyrosine-protein phosphatase domain maps to 820–1079 (FADEYQQLSL…VFLHQCILRF (260 aa)). Cys1020 acts as the Phosphocysteine intermediate in catalysis. Phosphotyrosine occurs at positions 1094 and 1102.

The protein belongs to the protein-tyrosine phosphatase family. Receptor class 3 subfamily. As to quaternary structure, homodimer; disulfide-linked. Interacts with LCK. Interacts (phosphorylated form) with GRB2 (via SH2 domain). Interacts (phosphorylated form) with FYN (via SH2 domain). Interacts (via extracellular domain) with CEACAM20 (via extracellular domain); the interaction dephosphorylates CEACAM20. In terms of tissue distribution, expressed at high levels in the brain, spleen and liver and at lower levels in the heart and stomach. Expressed in pancreatic and colorectal cancer cells, but not in normal pancreas or colon. Expression in hepatocellular carcinoma is related to the differentiation status of the tumor and expression is inversely related to tumor aggressiveness.

It is found in the cell projection. Its subcellular location is the microvillus membrane. It localises to the apical cell membrane. The protein localises to the cytoplasm. The enzyme catalyses O-phospho-L-tyrosyl-[protein] + H2O = L-tyrosyl-[protein] + phosphate. Its activity is regulated as follows. Regulated by reversible dimerization. Dimerization reduces its catalytic activity. In terms of biological role, protein phosphatase that may contribute to contact inhibition of cell growth and motility by mediating the dephosphorylation of focal adhesion-associated substrates and thus negatively regulating integrin-promoted signaling processes. Induces apoptotic cell death by at least two distinct mechanisms: inhibition of cell survival signaling mediated by PI 3-kinase, Akt, and ILK and activation of a caspase-dependent proapoptotic pathway. Inhibits the basal activity of LCK and its activation in response to TCR stimulation and TCR-induced activation of MAP kinase and surface expression of CD69. Inhibits TCR-induced tyrosine phosphorylation of LAT and ZAP70. Inhibits both basal activity of DOK1 and its CD2-induced tyrosine phosphorylation. Induces dephosphorylation of BCAR1, focal adhesion kinase and SRC. Reduces migratory activity of activity of Jurkat cells. Reduces tyrosine phosphorylation of CEACAM20 and thereby contributes to suppress the intestinal immune response CEACAM20. In Homo sapiens (Human), this protein is Receptor-type tyrosine-protein phosphatase H (PTPRH).